Here is a 238-residue protein sequence, read N- to C-terminus: Enolase-phosphatase E1 (238 aa).

The protein belongs to the HAD-like hydrolase superfamily. MasA/MtnC family. Monomer. The cofactor is Mg(2+).

The enzyme catalyses 5-methylsulfanyl-2,3-dioxopentyl phosphate + H2O = 1,2-dihydroxy-5-(methylsulfanyl)pent-1-en-3-one + phosphate. Its pathway is amino-acid biosynthesis; L-methionine biosynthesis via salvage pathway; L-methionine from S-methyl-5-thio-alpha-D-ribose 1-phosphate: step 3/6. It participates in amino-acid biosynthesis; L-methionine biosynthesis via salvage pathway; L-methionine from S-methyl-5-thio-alpha-D-ribose 1-phosphate: step 4/6. In terms of biological role, bifunctional enzyme that catalyzes the enolization of 2,3-diketo-5-methylthiopentyl-1-phosphate (DK-MTP-1-P) into the intermediate 2-hydroxy-3-keto-5-methylthiopentenyl-1-phosphate (HK-MTPenyl-1-P), which is then dephosphorylated to form the acireductone 1,2-dihydroxy-3-keto-5-methylthiopentene (DHK-MTPene). The chain is Enolase-phosphatase E1 from Synechococcus elongatus (strain ATCC 33912 / PCC 7942 / FACHB-805) (Anacystis nidulans R2).